An 82-amino-acid polypeptide reads, in one-letter code: NAD(P)H-quinone oxidoreductase subunit O, organellar chromatophore (82 aa).

It belongs to the complex I NdhO subunit family. As to quaternary structure, NDH-1 can be composed of about 15 different subunits; different subcomplexes with different compositions have been identified which probably have different functions.

The protein resides in the plastid. Its subcellular location is the organellar chromatophore thylakoid membrane. The catalysed reaction is a plastoquinone + NADH + (n+1) H(+)(in) = a plastoquinol + NAD(+) + n H(+)(out). It carries out the reaction a plastoquinone + NADPH + (n+1) H(+)(in) = a plastoquinol + NADP(+) + n H(+)(out). NDH-1 shuttles electrons from an unknown electron donor, via FMN and iron-sulfur (Fe-S) centers, to quinones in the respiratory and/or the photosynthetic chain. The immediate electron acceptor for the enzyme in this species is believed to be plastoquinone. Couples the redox reaction to proton translocation, and thus conserves the redox energy in a proton gradient. Cyanobacterial NDH-1 also plays a role in inorganic carbon-concentration. This chain is NAD(P)H-quinone oxidoreductase subunit O, organellar chromatophore, found in Paulinella chromatophora.